The sequence spans 890 residues: MAFAWWPCLILALLSSLAASGFPRSPFRLLGKRSLPEGVANGIEVYSTKINSKVTSRFAHNVVTMRAVNRADTAKEVSFDVELPKTAFITNFTLTIDGVTYPGNVKEKEVAKKQYEKAVSQGKTAGLVKASGRKLEKFTVSVNVAAGSKVTFELTYEELLKRHKGKYEMYLKVQPKQLVKHFEIEVDIFEPQGISMLDAEASFITNDLLGSALTKSFSGKKGHVSFKPSLDQQRSCPTCTDSLLNGDFTITYDVNRESPGNVQIVNGYFVHFFAPQGLPVVPKNVAFVIDISGSMAGRKLEQTKEALLRILEDMQEEDYLNFILFSGDVSTWKEHLVQATPENLQEARTFVKSMEDKGMTNINDGLLRGISMLNKAREEHRIPERSTSIVIMLTDGDANVGESRPEKIQENVRNAIGGKFPLYNLGFGNNLNYNFLENMALENHGFARRIYEDSDADLQLQGFYEEVANPLLTGVEMEYPENAILDLTQNTYQHFYDGSEIVVAGRLVDEDMNSFKADVKGHGATNDLTFTEEVDMKEMEKALQERDYIFGNYIERLWAYLTIEQLLEKRKNAHGEEKENLTARALDLSLKYHFVTPLTSMVVTKPEDNEDERAIADKPGEDAEATPVSPAMSYLTSYQPPQNPYYYVDGDPHFIIQIPEKDDALCFNIDEAPGTVLRLIQDAVTGLTVNGQITGDKRGSPDSKTRKTYFGKLGIANAQMDFQVEVTTEKITLWNRAVPSTFSWLDTVTVTQDGLSMMINRKNMVVSFGDGVTFVVVLHQVWKKHPVHRDFLGFYVVDSHRMSAQTHGLLGQFFQPFDFKVSDIRPGSDPTKPDATLVVKNHQLIVTRGSQKDYRKDASIGTKVVCWFVHNNGEGLIDGVHTDYIVPNLF.

Positions 1–20 are cleaved as a signal peptide; it reads MAFAWWPCLILALLSSLAAS. The propeptide occupies 21-34; sequence GFPRSPFRLLGKRS. A VIT domain is found at 29-158; the sequence is LLGKRSLPEG…KVTFELTYEE (130 aa). N-linked (GlcNAc...) asparagine glycosylation occurs at N91. The VWFA domain maps to 284–467; sequence NVAFVIDISG…LQLQGFYEEV (184 aa). N-linked (GlcNAc...) asparagine glycosylation occurs at N580. D651 is subject to Aspartate 1-(chondroitin 4-sulfate)-ester. A propeptide spanning residues 652 to 890 is cleaved from the precursor; that stretch reads PHFIIQIPEK…HTDYIVPNLF (239 aa).

It belongs to the ITIH family. In terms of assembly, I-alpha-I plasma protease inhibitors are assembled from one or two heavy chains (HC) and one light chain, bikunin. Pre-alpha-inhibitor (P-alpha-I) is composed of ITIH3/HC3 and bikunin. Heavy chains are linked to bikunin via chondroitin 4-sulfate esterified to the alpha-carboxyl of the C-terminal aspartate after propeptide cleavage.

It is found in the secreted. In terms of biological role, may act as a carrier of hyaluronan in serum or as a binding protein between hyaluronan and other matrix protein, including those on cell surfaces in tissues to regulate the localization, synthesis and degradation of hyaluronan which are essential to cells undergoing biological processes. In Homo sapiens (Human), this protein is Inter-alpha-trypsin inhibitor heavy chain H3 (ITIH3).